We begin with the raw amino-acid sequence, 470 residues long: MAGENHQWQGSILYNMLMSAKQTRAAPEAPETRLVDQCWGCSCGDEPGVGREGLLGGRNVALLYRCCFCGKDHPRQGSILYSMLTSAKQTYAAPKAPEATLGPCWGCSCGSDPGVGRTGLPGGRPVALLYRCCFCGENHPRQGSILYSLLTSSKQTHVAPAAPEARPGGAWWDRSYFAQKPGGKEALPGGRATALLYRCCFCGEDHPQQGSTLYCMPTSTNQAQAAPEERPRAPWWDTSSGALRPVALKSPQVVCEAASAGLLKTLRFVKYLPCFQVLPLDQQLVLVRNCWASLLMLELAQDRLQFETVEVSEPSMLQKILTTRRRETGGNEPLPVPTLQPHLAPPAEARKVPSASQVQAIKCFLSKCWSLNISTKEYAYLKGTVLFNPDVPGLQCVKYIQGLQWGTQQILSEHTRMTHQGPHDRFIELNSTLFLLRFINANVIAELFFRPIIGTVSMDDMMLEMLCTKI.

3 repeat units span residues 1–67, 68–133, and 134–200. The segment at 1–253 is 4 X 67 AA tandem repeats; that stretch reads MAGENHQWQG…RPVALKSPQV (253 aa). 3 short sequence motifs (LXXLL motif) span residues 13–17, 80–84, and 146–150; these read LYNML, LYSML, and LYSLL. The stretch at 201–253 is one 4; truncated repeat; it reads FCGEDHPQQGSTLYCMPTSTNQAQAAPEERPRAPWWDTSSGALRPVALKSPQV. The 265-residue stretch at 205–469 folds into the NR LBD domain; sequence DHPQQGSTLY…DMMLEMLCTK (265 aa). Positions 461–466 match the AF-2 motif motif; sequence MMLEML.

Belongs to the nuclear hormone receptor family. NR0 subfamily. As to quaternary structure, homodimer. Interacts with NR5A1, NR5A2, NR0B2 and with COPS2. Interacts with ESRRB; represses ESRRB activity at the GATA6 promoter.

The protein localises to the nucleus. Its subcellular location is the cytoplasm. In terms of biological role, nuclear receptor that lacks a DNA-binding domain and acts as a corepressor that inhibits the transcriptional activity of other nuclear receptors through heterodimeric interactions. Component of a cascade required for the development of the hypothalamic-pituitary-adrenal-gonadal axis. May also have a role in the development of the embryo and in the maintenance of embryonic stem cell pluripotency. This Pan troglodytes (Chimpanzee) protein is Nuclear receptor subfamily 0 group B member 1 (NR0B1).